The following is a 34-amino-acid chain: Protamine-Z1/Z2 (34 aa).

A disordered region spans residues 1–34; sequence PRRRRRSSRPVRRRRRYRRSTAARRRRRVVRRRR.

In terms of tissue distribution, testis.

It localises to the nucleus. It is found in the chromosome. Its function is as follows. Protamines substitute for histones in the chromatin of sperm during the haploid phase of spermatogenesis. They compact sperm DNA into a highly condensed, stable and inactive complex. This chain is Protamine-Z1/Z2, found in Sarda orientalis (Striped bonito).